Consider the following 335-residue polypeptide: Protein-lysine N-methyltransferase EEF2KMT (335 aa).

M1 bears the N-acetylmethionine mark. S-adenosyl-L-methionine-binding positions include W139, G165–G167, W228, and A247.

It belongs to the class I-like SAM-binding methyltransferase superfamily. EEF2KMT family. As to quaternary structure, interacts with FAM86B2 and FAM86C1P.

The protein localises to the cytoplasm. It catalyses the reaction L-lysyl-[protein] + 3 S-adenosyl-L-methionine = N(6),N(6),N(6)-trimethyl-L-lysyl-[protein] + 3 S-adenosyl-L-homocysteine + 3 H(+). In terms of biological role, catalyzes the trimethylation of eukaryotic elongation factor 2 (EEF2) on 'Lys-525'. This chain is Protein-lysine N-methyltransferase EEF2KMT (Eef2kmt), found in Mus musculus (Mouse).